Reading from the N-terminus, the 536-residue chain is Arginine--tRNA ligase (536 aa).

The 'HIGH' region signature appears at 119-129 (ANPTGFLHIGH).

The protein belongs to the class-I aminoacyl-tRNA synthetase family. In terms of assembly, monomer.

It is found in the cytoplasm. The enzyme catalyses tRNA(Arg) + L-arginine + ATP = L-arginyl-tRNA(Arg) + AMP + diphosphate. This is Arginine--tRNA ligase from Mycoplasma mobile (strain ATCC 43663 / 163K / NCTC 11711) (Mesomycoplasma mobile).